Here is a 223-residue protein sequence, read N- to C-terminus: ATP phosphoribosyltransferase (223 aa).

It belongs to the ATP phosphoribosyltransferase family. Short subfamily. As to quaternary structure, heteromultimer composed of HisG and HisZ subunits.

It is found in the cytoplasm. It catalyses the reaction 1-(5-phospho-beta-D-ribosyl)-ATP + diphosphate = 5-phospho-alpha-D-ribose 1-diphosphate + ATP. It participates in amino-acid biosynthesis; L-histidine biosynthesis; L-histidine from 5-phospho-alpha-D-ribose 1-diphosphate: step 1/9. Its function is as follows. Catalyzes the condensation of ATP and 5-phosphoribose 1-diphosphate to form N'-(5'-phosphoribosyl)-ATP (PR-ATP). Has a crucial role in the pathway because the rate of histidine biosynthesis seems to be controlled primarily by regulation of HisG enzymatic activity. The protein is ATP phosphoribosyltransferase of Sphingopyxis alaskensis (strain DSM 13593 / LMG 18877 / RB2256) (Sphingomonas alaskensis).